A 327-amino-acid chain; its full sequence is Ferrochelatase (327 aa).

Histidine 196 and glutamate 277 together coordinate Fe cation.

This sequence belongs to the ferrochelatase family.

It is found in the cytoplasm. The enzyme catalyses heme b + 2 H(+) = protoporphyrin IX + Fe(2+). It participates in porphyrin-containing compound metabolism; protoheme biosynthesis; protoheme from protoporphyrin-IX: step 1/1. In terms of biological role, catalyzes the ferrous insertion into protoporphyrin IX. This is Ferrochelatase from Gloeobacter violaceus (strain ATCC 29082 / PCC 7421).